Here is a 591-residue protein sequence, read N- to C-terminus: Pentatricopeptide repeat-containing protein At2g35130 (591 aa).

PPR repeat units follow at residues 154-188 (DVIC…RYVP), 189-223 (TEDT…HVSP), 227-262 (GVTV…RCKP), 263-297 (TTET…QCKP), 298-332 (NICT…GLEP), 333-367 (DVYV…GCEP), 368-402 (DRAS…GIAP), 403-437 (TMKS…GVEP), 438-472 (DTFV…PCTA), 473-507 (DIST…NFRP), 508-542 (DVVT…GCAP), and 543-573 (DGGT…MHKG).

It belongs to the PPR family. P subfamily.

The protein is Pentatricopeptide repeat-containing protein At2g35130 of Arabidopsis thaliana (Mouse-ear cress).